We begin with the raw amino-acid sequence, 356 residues long: MKLDYVLLLLFHLCFVNTELISVITGKIKDSGTTIAISAGAFWGLKDRLKCYLYECCHEPDVNFNYHTLDADIANLLFGQHLVKDVVVNSIKSHWYNENPRKPLVLSFHGYTGSGKNYVAEIIANNTFRLGLRSTFVQHIVATNDFPDKNKLEEYQVELRNRILTTVQKCQRSIFIFDEADKLPEQLLGAIKPFLDYYSTISGVDFRRSIFILLSNKGGGEIARITKEQYESGYPREQLRLEAFERELMNFSYNEKGGLQMSELISNHLIDHFVPFLPLQREHVRSCVGAYLRKRGRGDLVSNVDFVERVLNSLQYFPESSKAFSSSGCKRVDAKTDLEMAKIRPLLSSVHFDDEL.

The N-terminal stretch at 1–18 (MKLDYVLLLLFHLCFVNT) is a signal peptide. Position 110-117 (110-117 (GYTGSGKN)) interacts with ATP. N-linked (GlcNAc...) asparagine glycans are attached at residues Asn-125 and Asn-250.

The protein belongs to the ClpA/ClpB family. Torsin subfamily.

Its subcellular location is the endoplasmic reticulum lumen. In terms of biological role, may serve as a molecular chaperone assisting in the proper folding of secreted and/or membrane proteins. The chain is Torsin-like protein (ooc-5) from Caenorhabditis elegans.